The following is a 406-amino-acid chain: Probable endo-xylogalacturonan hydrolase A (406 aa).

Residues 1 to 18 (MTLYRNLLLLASLGLSYA) form the signal peptide. N-linked (GlcNAc...) asparagine glycosylation occurs at N84. PbH1 repeat units follow at residues 183–213 (ATNV…DIGE) and 214–235 (STYV…ALKP). The Proton donor role is filled by D228. The active site involves H251. PbH1 repeat units follow at residues 266 to 289 (VKNI…KTYP), 299 to 320 (VSNV…QIQS), and 333 to 375 (PGNA…SISG). N-linked (GlcNAc...) asparagine glycans are attached at residues N278 and N301.

Belongs to the glycosyl hydrolase 28 family.

The protein resides in the secreted. Functionally, pectinolytic enzyme involved in the degradation of xylogalacturonan (xga), a galacturonan backbone heavily substituted with xylose, and which is one important component of the hairy regions of pectin. Activity requires a galacturonic acid backbone substituted with xylose. The protein is Probable endo-xylogalacturonan hydrolase A (xghA) of Aspergillus niger (strain ATCC MYA-4892 / CBS 513.88 / FGSC A1513).